The chain runs to 289 residues: Pyridoxal kinase PdxY (289 aa).

Substrate is bound by residues S9 and T44–Q45. Residues D112, V144, E149, and K182 each coordinate ATP. Residue D221 coordinates substrate.

This sequence belongs to the pyridoxine kinase family. PdxY subfamily. As to quaternary structure, homodimer. The cofactor is Mg(2+).

It carries out the reaction pyridoxal + ATP = pyridoxal 5'-phosphate + ADP + H(+). It participates in cofactor metabolism; pyridoxal 5'-phosphate salvage; pyridoxal 5'-phosphate from pyridoxal: step 1/1. Functionally, pyridoxal kinase involved in the salvage pathway of pyridoxal 5'-phosphate (PLP). Catalyzes the phosphorylation of pyridoxal to PLP. This Vibrio campbellii (strain ATCC BAA-1116) protein is Pyridoxal kinase PdxY.